The following is a 52-amino-acid chain: Transcriptional regulator SlrA (52 aa).

The region spanning 1 to 38 (MKTHVKKDLDKGWHMLIQEARSIGLGIHDVRQFLESET) is the Sin domain.

As to quaternary structure, component of the SlrR/SlrA complex.

In terms of biological role, required specifically for induction of eps and yqxM operons by antagonizing SinR. Regulates SlrR activity. Controls the initiation of biofilm formation. The chain is Transcriptional regulator SlrA (slrA) from Bacillus subtilis (strain 168).